Reading from the N-terminus, the 154-residue chain is Small ribosomal subunit protein bS6 (154 aa).

The tract at residues 97-154 is disordered; the sequence is DSEPSAMMQKRDRDDRKDRERGRRRDDEGFGGGGGFGGDRGDRGDRGDRGERSFGGEG. Basic and acidic residues-rich tracts occupy residues 105 to 124 and 135 to 154; these read QKRDRDDRKDRERGRRRDDE and DRGDRGDRGDRGERSFGGEG.

It belongs to the bacterial ribosomal protein bS6 family.

Functionally, binds together with bS18 to 16S ribosomal RNA. The polypeptide is Small ribosomal subunit protein bS6 (Methylobacterium radiotolerans (strain ATCC 27329 / DSM 1819 / JCM 2831 / NBRC 15690 / NCIMB 10815 / 0-1)).